The primary structure comprises 559 residues: Serine/threonine-protein kinase bur1 (559 aa).

The Protein kinase domain maps to 40–341; the sequence is YEVLGKLGEG…AIDALNHPYF (302 aa). ATP-binding positions include 46-54 and lysine 69; that span reads LGEGTFGEV. The active-site Proton acceptor is the aspartate 171. Positions 359 to 372 are enriched in basic and acidic residues; the sequence is SHEFDRRKFQDRKA. The segment at 359 to 559 is disordered; sequence SHEFDRRKFQ…GRDRDAYARR (201 aa). The span at 400-414 shows a compositional bias: gly residues; it reads GRDGYGGGGRNGANG. Basic and acidic residues-rich tracts occupy residues 457–467, 491–534, and 543–559; these read DHTDGYRDRPP, YDRD…DSRT, and PVRD…YARR.

It belongs to the protein kinase superfamily. CMGC Ser/Thr protein kinase family. CDC2/CDKX subfamily.

Its subcellular location is the nucleus. The enzyme catalyses L-seryl-[protein] + ATP = O-phospho-L-seryl-[protein] + ADP + H(+). It catalyses the reaction L-threonyl-[protein] + ATP = O-phospho-L-threonyl-[protein] + ADP + H(+). It carries out the reaction [DNA-directed RNA polymerase] + ATP = phospho-[DNA-directed RNA polymerase] + ADP + H(+). Serine/threonine-protein kinase involved in transcription regulation. Phosphorylates the mus-8/ubc2 ubiquitin-conjugating enzyme (E2), leading to monoubiquitination of histone H2B and the silencing of telomeric-associated genes. Also required for histone H3 methylation. Necessary for the recovery from pheromone-induced growth arrest in the cell cycle G1 phase. The chain is Serine/threonine-protein kinase bur1 (stk-1) from Neurospora crassa (strain ATCC 24698 / 74-OR23-1A / CBS 708.71 / DSM 1257 / FGSC 987).